Reading from the N-terminus, the 408-residue chain is Imidazolonepropionase (408 aa).

Positions 74 and 76 each coordinate Fe(3+). The Zn(2+) site is built by His74 and His76. Residues Arg83, Tyr146, and His179 each coordinate 4-imidazolone-5-propanoate. An N-formimidoyl-L-glutamate-binding site is contributed by Tyr146. Fe(3+) is bound at residue His244. Residue His244 coordinates Zn(2+). Residue Gln247 participates in 4-imidazolone-5-propanoate binding. Position 319 (Asp319) interacts with Fe(3+). Asp319 contributes to the Zn(2+) binding site. Positions 321 and 323 each coordinate N-formimidoyl-L-glutamate. 4-imidazolone-5-propanoate is bound at residue Thr324.

It belongs to the metallo-dependent hydrolases superfamily. HutI family. The cofactor is Zn(2+). It depends on Fe(3+) as a cofactor.

It is found in the cytoplasm. It catalyses the reaction 4-imidazolone-5-propanoate + H2O = N-formimidoyl-L-glutamate. It functions in the pathway amino-acid degradation; L-histidine degradation into L-glutamate; N-formimidoyl-L-glutamate from L-histidine: step 3/3. In terms of biological role, catalyzes the hydrolytic cleavage of the carbon-nitrogen bond in imidazolone-5-propanoate to yield N-formimidoyl-L-glutamate. It is the third step in the universal histidine degradation pathway. In Ralstonia nicotianae (strain ATCC BAA-1114 / GMI1000) (Ralstonia solanacearum), this protein is Imidazolonepropionase.